Here is a 146-residue protein sequence, read N- to C-terminus: Ribosome-binding factor A (146 aa).

Positions 121–146 (KQQQFGSADDVTENDIDEADDTEGKA) are disordered. Acidic residues predominate over residues 130–146 (DVTENDIDEADDTEGKA).

Belongs to the RbfA family. As to quaternary structure, monomer. Binds 30S ribosomal subunits, but not 50S ribosomal subunits or 70S ribosomes.

It is found in the cytoplasm. In terms of biological role, one of several proteins that assist in the late maturation steps of the functional core of the 30S ribosomal subunit. Associates with free 30S ribosomal subunits (but not with 30S subunits that are part of 70S ribosomes or polysomes). Required for efficient processing of 16S rRNA. May interact with the 5'-terminal helix region of 16S rRNA. In Shewanella sp. (strain MR-4), this protein is Ribosome-binding factor A.